A 321-amino-acid polypeptide reads, in one-letter code: F-box protein At4g35930 (321 aa).

Basic and acidic residues predominate over residues 1–13 (MGKVSPKDLDSKT). Residues 1 to 23 (MGKVSPKDLDSKTSVRKKKLKSS) form a disordered region. In terms of domain architecture, F-box spans 159–207 (ESQLESLPMDLLVKIVCHLHHDQLKAVFHVSQRIRMATILARQYHFNYT). The tract at residues 228-258 (WPFRRGDGNPTMVSSPHTPKAPKHAPRPPSR) is disordered.

In Arabidopsis thaliana (Mouse-ear cress), this protein is F-box protein At4g35930.